The chain runs to 390 residues: Chorismate synthase 1 (390 aa).

The NADP(+) site is built by R39 and R45. The interval 95-117 is disordered; that stretch reads EQEEKEMKRKVTKPRPGHADLNG. Residues 132-134, 253-254, G298, 313-317, and R339 contribute to the FMN site; these read RSS, NA, and KPIPT.

The protein belongs to the chorismate synthase family. Homotetramer. FMNH2 is required as a cofactor.

It carries out the reaction 5-O-(1-carboxyvinyl)-3-phosphoshikimate = chorismate + phosphate. It participates in metabolic intermediate biosynthesis; chorismate biosynthesis; chorismate from D-erythrose 4-phosphate and phosphoenolpyruvate: step 7/7. In terms of biological role, catalyzes the anti-1,4-elimination of the C-3 phosphate and the C-6 proR hydrogen from 5-enolpyruvylshikimate-3-phosphate (EPSP) to yield chorismate, which is the branch point compound that serves as the starting substrate for the three terminal pathways of aromatic amino acid biosynthesis. This reaction introduces a second double bond into the aromatic ring system. This is Chorismate synthase 1 from Bacillus thuringiensis (strain Al Hakam).